The chain runs to 372 residues: 4-hydroxy-3-methylbut-2-en-1-yl diphosphate synthase (flavodoxin) (372 aa).

[4Fe-4S] cluster contacts are provided by Cys-270, Cys-273, Cys-305, and Glu-312.

The protein belongs to the IspG family. The cofactor is [4Fe-4S] cluster.

The catalysed reaction is (2E)-4-hydroxy-3-methylbut-2-enyl diphosphate + oxidized [flavodoxin] + H2O + 2 H(+) = 2-C-methyl-D-erythritol 2,4-cyclic diphosphate + reduced [flavodoxin]. The protein operates within isoprenoid biosynthesis; isopentenyl diphosphate biosynthesis via DXP pathway; isopentenyl diphosphate from 1-deoxy-D-xylulose 5-phosphate: step 5/6. Converts 2C-methyl-D-erythritol 2,4-cyclodiphosphate (ME-2,4cPP) into 1-hydroxy-2-methyl-2-(E)-butenyl 4-diphosphate. This chain is 4-hydroxy-3-methylbut-2-en-1-yl diphosphate synthase (flavodoxin), found in Salmonella choleraesuis (strain SC-B67).